The following is a 333-amino-acid chain: Meiotic recombination protein rec24 (333 aa).

Belongs to the MEI4L family. Interacts with Rec7, as part of the meiotic recombination initiation complex.

The protein resides in the cytoplasm. The protein localises to the nucleus. In terms of biological role, required for correct meiotic chromosome segregation and recombination. Accessory protein required for Rec12 activity, which is involved in formation of the double-strand breaks (DSBs) that initiate meiotic recombination. This Schizosaccharomyces pombe (strain 972 / ATCC 24843) (Fission yeast) protein is Meiotic recombination protein rec24 (rec24).